Here is a 257-residue protein sequence, read N- to C-terminus: ADP-dependent (S)-NAD(P)H-hydrate dehydratase (257 aa).

Residues 1-257 (MGRLQRTLSN…VIERIPDTIR (257 aa)) form the YjeF C-terminal domain. Position 200 (glycine 200) interacts with AMP. Aspartate 201 contacts (6S)-NADPHX.

The protein belongs to the NnrD/CARKD family. In terms of assembly, homotetramer. It depends on Mg(2+) as a cofactor.

It carries out the reaction (6S)-NADHX + ADP = AMP + phosphate + NADH + H(+). The enzyme catalyses (6S)-NADPHX + ADP = AMP + phosphate + NADPH + H(+). Its function is as follows. Catalyzes the dehydration of the S-form of NAD(P)HX at the expense of ADP, which is converted to AMP. Together with NAD(P)HX epimerase, which catalyzes the epimerization of the S- and R-forms, the enzyme allows the repair of both epimers of NAD(P)HX, a damaged form of NAD(P)H that is a result of enzymatic or heat-dependent hydration. The chain is ADP-dependent (S)-NAD(P)H-hydrate dehydratase from Haloterrigena turkmenica (strain ATCC 51198 / DSM 5511 / JCM 9101 / NCIMB 13204 / VKM B-1734 / 4k) (Halococcus turkmenicus).